A 126-amino-acid polypeptide reads, in one-letter code: Aspartate 1-decarboxylase (126 aa).

The active-site Schiff-base intermediate with substrate; via pyruvic acid is the serine 25. A Pyruvic acid (Ser) modification is found at serine 25. Residue threonine 57 participates in substrate binding. Catalysis depends on tyrosine 58, which acts as the Proton donor. 73–75 (GAA) lines the substrate pocket.

This sequence belongs to the PanD family. As to quaternary structure, heterooctamer of four alpha and four beta subunits. Pyruvate is required as a cofactor. In terms of processing, is synthesized initially as an inactive proenzyme, which is activated by self-cleavage at a specific serine bond to produce a beta-subunit with a hydroxyl group at its C-terminus and an alpha-subunit with a pyruvoyl group at its N-terminus.

The protein localises to the cytoplasm. It catalyses the reaction L-aspartate + H(+) = beta-alanine + CO2. Its pathway is cofactor biosynthesis; (R)-pantothenate biosynthesis; beta-alanine from L-aspartate: step 1/1. Its function is as follows. Catalyzes the pyruvoyl-dependent decarboxylation of aspartate to produce beta-alanine. This Thioalkalivibrio sulfidiphilus (strain HL-EbGR7) protein is Aspartate 1-decarboxylase.